Consider the following 184-residue polypeptide: Thymidine kinase (184 aa).

ATP-binding positions include 15–22 (GPMFSGKS) and 89–92 (DEIQ). Glu-90 functions as the Proton acceptor in the catalytic mechanism. Zn(2+)-binding residues include Cys-146, Cys-149, Cys-178, and Cys-181.

Belongs to the thymidine kinase family. In terms of assembly, homotetramer.

It is found in the cytoplasm. It catalyses the reaction thymidine + ATP = dTMP + ADP + H(+). In Mesomycoplasma hyopneumoniae (strain 232) (Mycoplasma hyopneumoniae), this protein is Thymidine kinase.